A 681-amino-acid chain; its full sequence is MPKKKEDSQKTLSEKEAKGLIAKLSDEIRHHQYLYYVKNDPKISDFDFDQLFRRLQDLEEEFPQFKDLASPTLVVGSDLDKDFEKFQHKLPVLSLINTYNDNELLEWVNKTDPEGLYSVEWKIDGASIVLYYENGILKNGVTRGSGGIGDDVTDNIRTIRNIPLRLPKPITVYLRGEVFMTFKDFEEFNALSSGKYANPRNLSAGSIKQKNSSDTAKRPLRIFTYDATFPNMEKKFKTHQEIFSKLEKLTFPVPPNTAFVSGSKIAKTIQEFKKQKDSLGFPTDGLVIKLNDISKRDALGYTSHSPRWARAYKFDAIMKESKIVDITYAVGRTGKITPRAEIEPISLAGTTVTFATLHNQDYIDELGVGIGAIVRVAKRGEIIPAVEEVVTPGKEVFKIPDRCPSCNTQTIKKESLVDLFCPNPDCPDRVKNGIIFYCQRKQMDIEGLGDKQIEFLYDHDYIKSIADLYDLKDQKEKLMEEEGFGEKSVNIILKGIEQSKQKDFRFLLPSLGLSELGHKVTELLIEHGIDSIDEILSIAKDQKKIESLLEIPGIGPSTIQAFQENFSDKRILKLIERLKKAGLKMKADPIQVADQQPFAGQSWCVTGSFENFQPRDKAMDLIVYYGGRKVSAVSSKTTHLLAGPGAGSKLEKANELGVSVYDEKQFLDLLKSLKIDFKNLI.

Residues 45 to 49 (DFDFD), 94 to 95 (SL), and Glu120 contribute to the NAD(+) site. The active-site N6-AMP-lysine intermediate is the Lys122. Positions 143, 177, 289, and 313 each coordinate NAD(+). Zn(2+) contacts are provided by Cys403, Cys406, Cys421, and Cys426. Positions 593–681 (ADQQPFAGQS…SLKIDFKNLI (89 aa)) constitute a BRCT domain.

This sequence belongs to the NAD-dependent DNA ligase family. LigA subfamily. Requires Mg(2+) as cofactor. It depends on Mn(2+) as a cofactor.

It catalyses the reaction NAD(+) + (deoxyribonucleotide)n-3'-hydroxyl + 5'-phospho-(deoxyribonucleotide)m = (deoxyribonucleotide)n+m + AMP + beta-nicotinamide D-nucleotide.. DNA ligase that catalyzes the formation of phosphodiester linkages between 5'-phosphoryl and 3'-hydroxyl groups in double-stranded DNA using NAD as a coenzyme and as the energy source for the reaction. It is essential for DNA replication and repair of damaged DNA. This is DNA ligase from Leptospira interrogans serogroup Icterohaemorrhagiae serovar Lai (strain 56601).